The following is a 295-amino-acid chain: G1/S-specific cyclin-D1 (295 aa).

The 125-residue stretch at L28–L152 folds into the Cyclin N-terminal domain. The segment at A262–L283 is disordered. Residue K269 forms a Glycyl lysine isopeptide (Lys-Gly) (interchain with G-Cter in ubiquitin) linkage. T286 is subject to Phosphothreonine.

The protein belongs to the cyclin family. Cyclin D subfamily. In terms of assembly, interacts with either CDK4 or CDK6 protein kinase to form a serine/threonine kinase holoenzyme complex. The cyclin subunit imparts substrate specificity to the complex. Component of the ternary complex CCND1/CDK4/CDKN1B required for nuclear translocation and modulation of CDK4-mediated kinase activity. Interacts directly with CDKN1B. Can form similar complexes with either CDKN1A or CDKN2A. Interacts with UHRF2; the interaction ubiquitinates CCND1 and appears to occur independently of phosphorylation. Interacts with USP2. Interacts (via cyclin N-terminal domain) with INSM1 (via N-terminal region); the interaction competes with the binding of CCND1 to CDK4 during cell cycle progression and inhibits CDK4 activity. Interacts with CDK4; the interaction is prevented with the binding of CCND1 to INSM1 during cell cycle progression. Post-translationally, phosphorylation at Thr-286 by MAP kinases is required for ubiquitination and degradation by the DCX(AMBRA1) complex. It also plays an essential role for recognition by the FBXO31 component of SCF (SKP1-cullin-F-box) protein ligase complex following DNA damage. In terms of processing, ubiquitinated at Lys-269 by the DCX(AMBRA1) complex during the transition from G1 to S cell phase, leading to its degradation: ubiquitination is dependent on Thr-286 phosphorylation. The DCX(AMBRA1) complex represents the major regulator of CCND1 stability during the G1/S transition. Also ubiquitinated by the SCF(FBXO4) and Cul7-RING(FBXW8) ubiquitin-protein ligase complexes. Following DNA damage it is ubiquitinated by the SCF(FBXO31) protein ligase complex. SCF(FBXO31) ubiquitination is dependent on Thr-286 phosphorylation. Ubiquitinated also by UHRF2 apparently in a phosphorylation-independent manner. Ubiquitination leads to its degradation and G1 arrest. Deubiquitinated by USP2; leading to its stabilization. As to expression, expressed in the intestinal epithelium.

It localises to the nucleus. Its subcellular location is the cytoplasm. It is found in the nucleus membrane. Functionally, regulatory component of the cyclin D1-CDK4 (DC) complex that phosphorylates and inhibits members of the retinoblastoma (RB) protein family including RB1 and regulates the cell-cycle during G(1)/S transition. Phosphorylation of RB1 allows dissociation of the transcription factor E2F from the RB/E2F complex and the subsequent transcription of E2F target genes which are responsible for the progression through the G(1) phase. Hypophosphorylates RB1 in early G(1) phase. Cyclin D-CDK4 complexes are major integrators of various mitogenenic and antimitogenic signals. Also a substrate for SMAD3, phosphorylating SMAD3 in a cell-cycle-dependent manner and repressing its transcriptional activity. Component of the ternary complex, cyclin D1/CDK4/CDKN1B, required for nuclear translocation and activity of the cyclin D-CDK4 complex. Exhibits transcriptional corepressor activity with INSM1 on the NEUROD1 and INS promoters in a cell cycle-independent manner. In Mus musculus (Mouse), this protein is G1/S-specific cyclin-D1 (Ccnd1).